Here is a 70-residue protein sequence, read N- to C-terminus: Small, acid-soluble spore protein 1 (70 aa).

The protein belongs to the alpha/beta-type SASP family.

Functionally, SASP are bound to spore DNA. They are double-stranded DNA-binding proteins that cause DNA to change to an a-like conformation. They protect the DNA backbone from chemical and enzymatic cleavage and are thus involved in dormant spore's high resistance to UV light. The polypeptide is Small, acid-soluble spore protein 1 (sasP-1) (Bacillus cereus).